The chain runs to 164 residues: Cyclic pyranopterin monophosphate synthase (164 aa).

Substrate is bound by residues 75-77 (MCH) and 116-117 (ME). Residue aspartate 131 is part of the active site.

The protein belongs to the MoaC family. Homohexamer; trimer of dimers.

It catalyses the reaction (8S)-3',8-cyclo-7,8-dihydroguanosine 5'-triphosphate = cyclic pyranopterin phosphate + diphosphate. The protein operates within cofactor biosynthesis; molybdopterin biosynthesis. Catalyzes the conversion of (8S)-3',8-cyclo-7,8-dihydroguanosine 5'-triphosphate to cyclic pyranopterin monophosphate (cPMP). The polypeptide is Cyclic pyranopterin monophosphate synthase (Staphylococcus aureus (strain MSSA476)).